The primary structure comprises 356 residues: Phenylalanine--tRNA ligase alpha subunit (356 aa).

Glutamate 258 contributes to the Mg(2+) binding site.

The protein belongs to the class-II aminoacyl-tRNA synthetase family. Phe-tRNA synthetase alpha subunit type 1 subfamily. In terms of assembly, tetramer of two alpha and two beta subunits. Mg(2+) serves as cofactor.

The protein resides in the cytoplasm. The enzyme catalyses tRNA(Phe) + L-phenylalanine + ATP = L-phenylalanyl-tRNA(Phe) + AMP + diphosphate + H(+). This Macrococcus caseolyticus (strain JCSC5402) (Macrococcoides caseolyticum) protein is Phenylalanine--tRNA ligase alpha subunit.